A 571-amino-acid chain; its full sequence is Putative fatty-acid--CoA ligase fadD11 (571 aa).

Positions 1–19 are enriched in low complexity; sequence MARLRGAGAAGRCRPGRFG. Disordered stretches follow at residues 1-35 and 67-91; these read MARL…EPDR and RQRG…RCAH. Residues 78 to 91 show a composition bias toward basic residues; it reads ATVRRSRSRQRCAH. Helical transmembrane passes span 314–334 and 431–451; these read TLAF…MSEL and ANIE…MAIG.

This sequence belongs to the ATP-dependent AMP-binding enzyme family.

The protein resides in the cell membrane. This is Putative fatty-acid--CoA ligase fadD11 (fadD11) from Mycobacterium tuberculosis (strain CDC 1551 / Oshkosh).